We begin with the raw amino-acid sequence, 285 residues long: Eukaryotic translation initiation factor 3 subunit J (285 aa).

Disordered regions lie at residues 1–86 (MSWD…QLDE) and 232–285 (QARL…DDFM). A compositionally biased stretch (acidic residues) spans 22–41 (WEDEEDDGPVLESWDVDPEE). The stretch at 36–81 (DVDPEEEEKKKKEAKLQEAKRKAELKAKEDAEKAKKDAKRKELEQF) forms a coiled coil. The span at 42–86 (EEKKKKEAKLQEAKRKAELKAKEDAEKAKKDAKRKELEQFDQLDE) shows a compositional bias: basic and acidic residues. The segment covering 269–285 (DDMDDGQFDDLDDDDFM) has biased composition (acidic residues).

This sequence belongs to the eIF-3 subunit J family. As to quaternary structure, component of the eukaryotic translation initiation factor 3 (eIF-3) complex.

It is found in the cytoplasm. Functionally, component of the eukaryotic translation initiation factor 3 (eIF-3) complex, which is involved in protein synthesis of a specialized repertoire of mRNAs and, together with other initiation factors, stimulates binding of mRNA and methionyl-tRNAi to the 40S ribosome. The eIF-3 complex specifically targets and initiates translation of a subset of mRNAs involved in cell proliferation. In Candida albicans (strain SC5314 / ATCC MYA-2876) (Yeast), this protein is Eukaryotic translation initiation factor 3 subunit J.